The primary structure comprises 448 residues: MAAQVIPELQSLNLKTEGGALPQELAPSGAPENEDGDSEDDNGDDQGADESRTIEVLAAKKKKKKKPKKKKKDTQKAQTEPPRVILSALFPNNEYPVGELVEYKDENAYRTTNEEKRYLDRMNNDFLSEYRYAAEVHKQVRQYAQKTIKPGQTLTEIAEGIEDSVRALTGHDGLTEGDNLLGGIAFPTGVNLNNCAAHYSPNAGNKMVLQYEDVMKVDFGVHMNGRIVDSAFTIAFDPVYDNLLAAVKDATNTGIREAGIDVRMSDIGAAIQEAMESYEVEIKGTTYPVKAIRNLNGHTIGQFEIHGGKNGKSVPIVKGGDQSKMEEGEVYAIETFGSTGRGYVRDDMETSHYAKVPDAPNVPLRLSSAKNLLNVITKNFGTLPFCRRYLDRLRQDKYLLGLNNLVANGLVDAYPPLCDIKGSYTAQFEHTILLRPNIKEVISRGDDY.

Residues 1–83 are disordered; it reads MAAQVIPELQ…TQKAQTEPPR (83 aa). Positions 32–48 are enriched in acidic residues; it reads ENEDGDSEDDNGDDQGA. The segment covering 59-73 has biased composition (basic residues); the sequence is AKKKKKKKPKKKKKD. Histidine 198 contributes to the substrate binding site. Residues aspartate 218, aspartate 229, and histidine 298 each coordinate a divalent metal cation. Histidine 306 is a substrate binding site. A divalent metal cation is bound by residues glutamate 334 and glutamate 429.

This sequence belongs to the peptidase M24A family. Methionine aminopeptidase eukaryotic type 2 subfamily. Co(2+) is required as a cofactor. The cofactor is Zn(2+). Requires Mn(2+) as cofactor. Fe(2+) serves as cofactor.

It is found in the cytoplasm. The catalysed reaction is Release of N-terminal amino acids, preferentially methionine, from peptides and arylamides.. Its function is as follows. Cotranslationally removes the N-terminal methionine from nascent proteins. The N-terminal methionine is often cleaved when the second residue in the primary sequence is small and uncharged (Met-Ala-, Cys, Gly, Pro, Ser, Thr, or Val). This chain is Methionine aminopeptidase 2-1, found in Ajellomyces capsulatus (strain G186AR / H82 / ATCC MYA-2454 / RMSCC 2432) (Darling's disease fungus).